The sequence spans 431 residues: Asparagine--tRNA ligase (431 aa).

The protein belongs to the class-II aminoacyl-tRNA synthetase family.

Its subcellular location is the cytoplasm. It catalyses the reaction tRNA(Asn) + L-asparagine + ATP = L-asparaginyl-tRNA(Asn) + AMP + diphosphate + H(+). In Thermococcus kodakarensis (strain ATCC BAA-918 / JCM 12380 / KOD1) (Pyrococcus kodakaraensis (strain KOD1)), this protein is Asparagine--tRNA ligase.